We begin with the raw amino-acid sequence, 139 residues long: D-ribose pyranase (139 aa).

The active-site Proton donor is the H20. Residues D28, H106, and 128 to 130 (YAN) each bind substrate.

This sequence belongs to the RbsD / FucU family. RbsD subfamily. Homodecamer.

Its subcellular location is the cytoplasm. It carries out the reaction beta-D-ribopyranose = beta-D-ribofuranose. It functions in the pathway carbohydrate metabolism; D-ribose degradation; D-ribose 5-phosphate from beta-D-ribopyranose: step 1/2. In terms of biological role, catalyzes the interconversion of beta-pyran and beta-furan forms of D-ribose. This Enterobacter sp. (strain 638) protein is D-ribose pyranase.